A 376-amino-acid chain; its full sequence is UPF0754 membrane protein BH1148 (376 aa).

Helical transmembrane passes span 3–23 (LILFMIVIGAVIGGVTNSLAI) and 355–375 (YLGALLGGGIGLVQSLIILLI).

It belongs to the UPF0754 family.

The protein localises to the cell membrane. This Halalkalibacterium halodurans (strain ATCC BAA-125 / DSM 18197 / FERM 7344 / JCM 9153 / C-125) (Bacillus halodurans) protein is UPF0754 membrane protein BH1148.